Consider the following 344-residue polypeptide: Cell adhesion molecule CEACAM6 (344 aa).

Residues 1–34 (MGPPSAPPCRLHVPWKEVLLTASLLTFWNPPTTA) form the signal peptide. In terms of domain architecture, Ig-like V-type spans 35 to 142 (KLTIESTPFN…EATGQFHVYP (108 aa)). 12 N-linked (GlcNAc...) asparagine glycosylation sites follow: asparagine 104, asparagine 111, asparagine 115, asparagine 152, asparagine 173, asparagine 197, asparagine 224, asparagine 256, asparagine 274, asparagine 288, asparagine 292, and asparagine 309. Ig-like C2-type domains follow at residues 145 to 232 (PKPS…VTLN) and 240 to 314 (PTIS…TTVT). Cysteine 167 and cysteine 215 are oxidised to a cystine. A disulfide bond links cysteine 259 and cysteine 299. Glycine 320 carries the GPI-anchor amidated glycine lipid modification. Residues 321-344 (SAPVLSAVATVGITIGVLARVALI) constitute a propeptide, removed in mature form.

Belongs to the immunoglobulin superfamily. CEA family. Homodimer; homodimerizes via its Ig-like V-type domain. Heterodimer with CEACAM8; heterodimerizes via its Ig-like V-type domain. In terms of processing, glycosylated. In terms of tissue distribution, expressed in neutrophils. Expressed in columnar epithelial and goblet cells of the colon. Expressed in numerous tumor cell lines (at protein level).

It is found in the cell membrane. The protein resides in the apical cell membrane. It localises to the cell surface. Functionally, cell surface glycoprotein that plays a role in cell adhesion and tumor progression. Intercellular adhesion occurs in a calcium- and fibronectin-independent manner. Mediates homophilic and heterophilic cell adhesion with other carcinoembryonic antigen-related cell adhesion molecules, such as CEACAM5 and CEACAM8. Heterophilic interaction with CEACAM8 occurs in activated neutrophils. Plays a role in neutrophil adhesion to cytokine-activated endothelial cells. Plays a role in cell migration and cell adhesion to endothelial cells. The chain is Cell adhesion molecule CEACAM6 from Homo sapiens (Human).